We begin with the raw amino-acid sequence, 453 residues long: UDP-glycosyltransferase 74E2 (453 aa).

His17 (proton acceptor) is an active-site residue. His17 serves as a coordination point for an anthocyanidin. Asp109 (charge relay) is an active-site residue. UDP-alpha-D-glucose is bound by residues Thr131, Gln334, His349, Trp352, Asn353, Ser354, Glu357, Asp373, and Gln374.

The protein belongs to the UDP-glycosyltransferase family. As to expression, expressed in roots, cotyledons and leaf hydathodes.

The catalysed reaction is (indol-3-yl)butanoate + UDP-alpha-D-glucose = 4-(indol-3-yl)butanoyl-beta-D-glucose + UDP. Functionally, glucosyltransferase that acts on the auxin indole-3-butyric acid (IBA). Mediates abiotic stress responses and stress-induced morphological adaptations by regulating auxin homeostasis. Possesses low activity in vitro on jasmonate (JA) and the synthetic auxin analog naphthaleneacetic acid (NAA). The polypeptide is UDP-glycosyltransferase 74E2 (UGT74E2) (Arabidopsis thaliana (Mouse-ear cress)).